We begin with the raw amino-acid sequence, 386 residues long: Protein-glutamate methylesterase/protein-glutamine glutaminase 3 (386 aa).

Positions 4–121 (KVLVVDDSGF…SRNPQKVKQL (118 aa)) constitute a Response regulatory domain. 4-aspartylphosphate is present on aspartate 55. Low complexity predominate over residues 132-194 (SNRRSSGFGS…SHAPAHPTTS (63 aa)). The segment at 132-197 (SNRRSSGFGS…PAHPTTSGTA (66 aa)) is disordered. A CheB-type methylesterase domain is found at 191-383 (PTTSGTAKRK…LDDIGRHLVE (193 aa)). Residues serine 210, histidine 237, and aspartate 330 contribute to the active site.

The protein belongs to the CheB family. In terms of processing, phosphorylated by CheA. Phosphorylation of the N-terminal regulatory domain activates the methylesterase activity.

The protein resides in the cytoplasm. The enzyme catalyses [protein]-L-glutamate 5-O-methyl ester + H2O = L-glutamyl-[protein] + methanol + H(+). The catalysed reaction is L-glutaminyl-[protein] + H2O = L-glutamyl-[protein] + NH4(+). Its function is as follows. Involved in chemotaxis. Part of a chemotaxis signal transduction system that modulates chemotaxis in response to various stimuli. Catalyzes the demethylation of specific methylglutamate residues introduced into the chemoreceptors (methyl-accepting chemotaxis proteins or MCP) by CheR. Also mediates the irreversible deamidation of specific glutamine residues to glutamic acid. The protein is Protein-glutamate methylesterase/protein-glutamine glutaminase 3 of Pseudomonas syringae pv. syringae (strain B728a).